Reading from the N-terminus, the 296-residue chain is Urease accessory protein UreD (296 aa).

The protein belongs to the UreD family. As to quaternary structure, ureD, UreF and UreG form a complex that acts as a GTP-hydrolysis-dependent molecular chaperone, activating the urease apoprotein by helping to assemble the nickel containing metallocenter of UreC. The UreE protein probably delivers the nickel.

It localises to the cytoplasm. Required for maturation of urease via the functional incorporation of the urease nickel metallocenter. This Nitrosococcus oceani (strain ATCC 19707 / BCRC 17464 / JCM 30415 / NCIMB 11848 / C-107) protein is Urease accessory protein UreD.